We begin with the raw amino-acid sequence, 33 residues long: Kappa-theraphotoxin-Pg2a (33 aa).

3 cysteine pairs are disulfide-bonded: Cys2/Cys16, Cys9/Cys21, and Cys15/Cys28.

As to expression, expressed by the venom gland.

Its subcellular location is the secreted. In terms of biological role, gating modifier of Kv2.1/KCNB1 channels. The sequence is that of Kappa-theraphotoxin-Pg2a from Chilobrachys guangxiensis (Chinese earth tiger tarantula).